The chain runs to 671 residues: DNA ligase (671 aa).

NAD(+) contacts are provided by residues 36–40, 85–86, and glutamate 115; these read DHVYD and SM. Lysine 117 functions as the N6-AMP-lysine intermediate in the catalytic mechanism. Residues arginine 138, glutamate 172, lysine 287, and lysine 311 each contribute to the NAD(+) site. Cysteine 405, cysteine 408, cysteine 423, and cysteine 428 together coordinate Zn(2+). The BRCT domain maps to 588–671; sequence AADNFFKGKT…SKIEEKDTEK (84 aa).

It belongs to the NAD-dependent DNA ligase family. LigA subfamily. Mg(2+) serves as cofactor. Mn(2+) is required as a cofactor.

The enzyme catalyses NAD(+) + (deoxyribonucleotide)n-3'-hydroxyl + 5'-phospho-(deoxyribonucleotide)m = (deoxyribonucleotide)n+m + AMP + beta-nicotinamide D-nucleotide.. DNA ligase that catalyzes the formation of phosphodiester linkages between 5'-phosphoryl and 3'-hydroxyl groups in double-stranded DNA using NAD as a coenzyme and as the energy source for the reaction. It is essential for DNA replication and repair of damaged DNA. In Lactobacillus delbrueckii subsp. bulgaricus (strain ATCC 11842 / DSM 20081 / BCRC 10696 / JCM 1002 / NBRC 13953 / NCIMB 11778 / NCTC 12712 / WDCM 00102 / Lb 14), this protein is DNA ligase.